Here is a 262-residue protein sequence, read N- to C-terminus: MLDPIAIQLGPLAIRWYALCIVTGLILAVYLTMKEAPRKKIIPDDILDFILVAFPLAILGARLYYVIFRFDYYSQNLGEIFAIWNGGLAIYGGLITGALVLYIFADRKLINTWDFLDIAAPSVMIAQSLGRWGNFFNQEAYGATVDNLDYLPGFIRDQMYIEGSYRQPTFLYESLWNLLGFALILIFRRKWKSLRRGHITAFYLIWYGFGRMVIEGMRTDSLMFFGLRVSQWLSVVFIGLGIMIVIYQNRKKAPYYITEEEN.

4 helical membrane-spanning segments follow: residues 9–29 (LGPL…ILAV), 41–61 (IIPD…ILGA), 80–100 (IFAI…GALV), and 109–129 (LINT…AQSL). Arg131 serves as a coordination point for a 1,2-diacyl-sn-glycero-3-phospho-(1'-sn-glycerol). A run of 3 helical transmembrane segments spans residues 167-187 (QPTF…ILIF), 197-217 (GHIT…IEGM), and 226-246 (GLRV…MIVI).

Belongs to the Lgt family.

It is found in the cell membrane. It catalyses the reaction L-cysteinyl-[prolipoprotein] + a 1,2-diacyl-sn-glycero-3-phospho-(1'-sn-glycerol) = an S-1,2-diacyl-sn-glyceryl-L-cysteinyl-[prolipoprotein] + sn-glycerol 1-phosphate + H(+). The protein operates within protein modification; lipoprotein biosynthesis (diacylglyceryl transfer). Catalyzes the transfer of the diacylglyceryl group from phosphatidylglycerol to the sulfhydryl group of the N-terminal cysteine of a prolipoprotein, the first step in the formation of mature lipoproteins. This chain is Phosphatidylglycerol--prolipoprotein diacylglyceryl transferase, found in Streptococcus pneumoniae (strain Taiwan19F-14).